The primary structure comprises 95 residues: Aspartyl/glutamyl-tRNA(Asn/Gln) amidotransferase subunit C (95 aa).

Belongs to the GatC family. Heterotrimer of A, B and C subunits.

The catalysed reaction is L-glutamyl-tRNA(Gln) + L-glutamine + ATP + H2O = L-glutaminyl-tRNA(Gln) + L-glutamate + ADP + phosphate + H(+). It carries out the reaction L-aspartyl-tRNA(Asn) + L-glutamine + ATP + H2O = L-asparaginyl-tRNA(Asn) + L-glutamate + ADP + phosphate + 2 H(+). In terms of biological role, allows the formation of correctly charged Asn-tRNA(Asn) or Gln-tRNA(Gln) through the transamidation of misacylated Asp-tRNA(Asn) or Glu-tRNA(Gln) in organisms which lack either or both of asparaginyl-tRNA or glutaminyl-tRNA synthetases. The reaction takes place in the presence of glutamine and ATP through an activated phospho-Asp-tRNA(Asn) or phospho-Glu-tRNA(Gln). This is Aspartyl/glutamyl-tRNA(Asn/Gln) amidotransferase subunit C from Xanthobacter autotrophicus (strain ATCC BAA-1158 / Py2).